The following is a 208-amino-acid chain: Protein-L-isoaspartate O-methyltransferase (208 aa).

Serine 59 is an active-site residue.

The protein belongs to the methyltransferase superfamily. L-isoaspartyl/D-aspartyl protein methyltransferase family.

Its subcellular location is the cytoplasm. The catalysed reaction is [protein]-L-isoaspartate + S-adenosyl-L-methionine = [protein]-L-isoaspartate alpha-methyl ester + S-adenosyl-L-homocysteine. Its function is as follows. Catalyzes the methyl esterification of L-isoaspartyl residues in peptides and proteins that result from spontaneous decomposition of normal L-aspartyl and L-asparaginyl residues. It plays a role in the repair and/or degradation of damaged proteins. This chain is Protein-L-isoaspartate O-methyltransferase, found in Yersinia enterocolitica serotype O:8 / biotype 1B (strain NCTC 13174 / 8081).